Reading from the N-terminus, the 208-residue chain is Uridine kinase (208 aa).

G11–T18 serves as a coordination point for ATP.

It belongs to the uridine kinase family.

It localises to the cytoplasm. The enzyme catalyses uridine + ATP = UMP + ADP + H(+). It catalyses the reaction cytidine + ATP = CMP + ADP + H(+). It functions in the pathway pyrimidine metabolism; CTP biosynthesis via salvage pathway; CTP from cytidine: step 1/3. It participates in pyrimidine metabolism; UMP biosynthesis via salvage pathway; UMP from uridine: step 1/1. This Staphylococcus carnosus (strain TM300) protein is Uridine kinase.